The chain runs to 185 residues: uncharacterized protein (185 aa).

The next 2 helical transmembrane spans lie at 1-19 (MLNI…TSSA) and 105-125 (AGFI…TMDV).

The protein resides in the membrane. This is an uncharacterized protein from Caenorhabditis elegans.